The following is a 444-amino-acid chain: tRNA-2-methylthio-N(6)-dimethylallyladenosine synthase (444 aa).

Residues 3-117 enclose the MTTase N-terminal domain; that stretch reads RGLYIESYGC…LPELIMKVKR (115 aa). [4Fe-4S] cluster contacts are provided by cysteine 12, cysteine 48, cysteine 80, cysteine 155, cysteine 159, and cysteine 162. The region spanning 141–374 is the Radical SAM core domain; sequence ANGGVSAYVS…LLTKQQLQFN (234 aa). One can recognise a TRAM domain in the interval 375–441; sequence KSMEGRVMDV…QNSLEGTVLS (67 aa).

The protein belongs to the methylthiotransferase family. MiaB subfamily. In terms of assembly, monomer. It depends on [4Fe-4S] cluster as a cofactor.

Its subcellular location is the cytoplasm. It carries out the reaction N(6)-dimethylallyladenosine(37) in tRNA + (sulfur carrier)-SH + AH2 + 2 S-adenosyl-L-methionine = 2-methylsulfanyl-N(6)-dimethylallyladenosine(37) in tRNA + (sulfur carrier)-H + 5'-deoxyadenosine + L-methionine + A + S-adenosyl-L-homocysteine + 2 H(+). Functionally, catalyzes the methylthiolation of N6-(dimethylallyl)adenosine (i(6)A), leading to the formation of 2-methylthio-N6-(dimethylallyl)adenosine (ms(2)i(6)A) at position 37 in tRNAs that read codons beginning with uridine. This is tRNA-2-methylthio-N(6)-dimethylallyladenosine synthase from Anaplasma phagocytophilum (strain HZ).